Reading from the N-terminus, the 343-residue chain is Zinc finger protein STP3 (343 aa).

Disordered stretches follow at residues 31–56 and 71–140; these read YNGE…SGSA and SNDV…KPRK. The span at 33–45 shows a compositional bias: polar residues; sequence GEASSASTHPTLP. Low complexity-rich tracts occupy residues 46 to 56, 71 to 86, and 94 to 120; these read NMNISNGSGSA, SNDV…FLPS, and SASA…AGPS. Phosphoserine is present on residues Ser-71 and Ser-111. The segment at 169–191 adopts a C2H2-type zinc-finger fold; that stretch reads HKCPICHRGFARNNDLLRHKKRH. Residues 198-222 are disordered; that stretch reads SQSGVLSNHNDGKGGSVSPNDDDTH.

The protein localises to the nucleus. This is Zinc finger protein STP3 (STP3) from Saccharomyces cerevisiae (strain ATCC 204508 / S288c) (Baker's yeast).